A 185-amino-acid chain; its full sequence is Peptidyl-tRNA hydrolase (185 aa).

Position 14 (Y14) interacts with tRNA. The Proton acceptor role is filled by H19. TRNA-binding residues include F64, N66, and N112.

This sequence belongs to the PTH family. In terms of assembly, monomer.

It is found in the cytoplasm. It catalyses the reaction an N-acyl-L-alpha-aminoacyl-tRNA + H2O = an N-acyl-L-amino acid + a tRNA + H(+). Functionally, hydrolyzes ribosome-free peptidyl-tRNAs (with 1 or more amino acids incorporated), which drop off the ribosome during protein synthesis, or as a result of ribosome stalling. In terms of biological role, catalyzes the release of premature peptidyl moieties from peptidyl-tRNA molecules trapped in stalled 50S ribosomal subunits, and thus maintains levels of free tRNAs and 50S ribosomes. This Caldanaerobacter subterraneus subsp. tengcongensis (strain DSM 15242 / JCM 11007 / NBRC 100824 / MB4) (Thermoanaerobacter tengcongensis) protein is Peptidyl-tRNA hydrolase.